Here is a 120-residue protein sequence, read N- to C-terminus: Large ribosomal subunit protein eL18 (120 aa).

Belongs to the eukaryotic ribosomal protein eL18 family.

The sequence is that of Large ribosomal subunit protein eL18 from Thermoplasma acidophilum (strain ATCC 25905 / DSM 1728 / JCM 9062 / NBRC 15155 / AMRC-C165).